The following is a 326-amino-acid chain: D-threonate 4-phosphate dehydrogenase (326 aa).

2 residues coordinate substrate: His-138 and Thr-139. A divalent metal cation-binding residues include His-168, His-212, and His-267. Substrate is bound by residues Lys-275, Asn-284, and Arg-293.

It belongs to the PdxA family. PdxA2 subfamily. Homodimer. It depends on a divalent metal cation as a cofactor.

The enzyme catalyses 4-O-phospho-D-threonate + NAD(+) = dihydroxyacetone phosphate + CO2 + NADH. In terms of biological role, catalyzes the NAD-dependent oxidation and subsequent decarboxylation of D-threonate 4-phosphate to produce dihydroxyacetone phosphate (DHAP). Can also use 4-hydroxy-L-threonine 4-phosphate as substrate. This Pectobacterium atrosepticum (strain SCRI 1043 / ATCC BAA-672) (Erwinia carotovora subsp. atroseptica) protein is D-threonate 4-phosphate dehydrogenase.